A 182-amino-acid polypeptide reads, in one-letter code: CDP-diacylglycerol--glycerol-3-phosphate 3-phosphatidyltransferase (182 aa).

At 1–12 (MQLNIPTWLTLF) the chain is on the cytoplasmic side. A helical membrane pass occupies residues 13 to 37 (RVVLIPFFVLAFYLPFVWAPMVCAI). The Periplasmic segment spans residues 38–60 (IFVFAAATDWFDGFLARRWKQTT). Residues 61–81 (RFGAFLDPVADKVMVAIALVL) traverse the membrane as a helical segment. Topologically, residues 82–86 (VAEHY) are cytoplasmic. The helical transmembrane segment at 87–107 (HVWWITLPAATMIAREIIISS) threads the bilayer. Over 108–145 (LREWMAEIGKRSSVAVSWIGKVKTTAQMGSLVGLLWRP) the chain is Periplasmic. The chain crosses the membrane as a helical span at residues 146–168 (DHNIELASFVLLYIAAVLTFWSM). At 169–181 (FQYLNAAWKDLLE) the chain is on the cytoplasmic side.

This sequence belongs to the CDP-alcohol phosphatidyltransferase class-I family.

It localises to the cell inner membrane. The catalysed reaction is a CDP-1,2-diacyl-sn-glycerol + sn-glycerol 3-phosphate = a 1,2-diacyl-sn-glycero-3-phospho-(1'-sn-glycero-3'-phosphate) + CMP + H(+). It participates in phospholipid metabolism; phosphatidylglycerol biosynthesis; phosphatidylglycerol from CDP-diacylglycerol: step 1/2. In terms of biological role, catalyzes the conversion of cytidine diphosphate diacylglycerol (CDP-DG) and glycerol 3-phosphate into phosphatidylglycerol. Essential for the synthesis of anionic phospholipids, thereby playing a role in balancing the ratio of zwitterionic and anionic phospholipids, which is thought to be important for normal membrane function. The protein is CDP-diacylglycerol--glycerol-3-phosphate 3-phosphatidyltransferase of Yersinia enterocolitica serotype O:8 / biotype 1B (strain NCTC 13174 / 8081).